The following is a 399-amino-acid chain: Acetate kinase (399 aa).

Residue Asn8 coordinates Mg(2+). ATP is bound at residue Lys15. Residue Arg89 participates in substrate binding. Residue Asp146 is the Proton donor/acceptor of the active site. Residues 206 to 210, 283 to 285, and 331 to 335 contribute to the ATP site; these read HVGNG, DMR, and GMGEN. Glu383 provides a ligand contact to Mg(2+).

It belongs to the acetokinase family. Homodimer. Requires Mg(2+) as cofactor. Mn(2+) serves as cofactor.

Its subcellular location is the cytoplasm. It catalyses the reaction acetate + ATP = acetyl phosphate + ADP. Its pathway is metabolic intermediate biosynthesis; acetyl-CoA biosynthesis; acetyl-CoA from acetate: step 1/2. Its function is as follows. Catalyzes the formation of acetyl phosphate from acetate and ATP. Can also catalyze the reverse reaction. The chain is Acetate kinase from Streptococcus equi subsp. zooepidemicus (strain H70).